Reading from the N-terminus, the 411-residue chain is Ubiquitin-binding protein CUE5 (411 aa).

Positions 1-12 are enriched in basic and acidic residues; sequence MEEKEGIKDSSL. Disordered regions lie at residues 1–102 and 142–411; these read MEEK…NPIL and ESGK…DDEM. Lys-15 participates in a covalent cross-link: Glycyl lysine isopeptide (Lys-Gly) (interchain with G-Cter in ubiquitin). A phosphoserine mark is found at Ser-21 and Ser-36. A compositionally biased stretch (basic and acidic residues) spans 25 to 58; the sequence is DISKTTDVDLNSDGKKDNDTSAKDGTPKVEEKVN. Lys-59 participates in a covalent cross-link: Glycyl lysine isopeptide (Lys-Gly) (interchain with G-Cter in ubiquitin). A Phosphothreonine modification is found at Thr-70. Lys-76 participates in a covalent cross-link: Glycyl lysine isopeptide (Lys-Gly) (interchain with G-Cter in ubiquitin). A Phosphoserine modification is found at Ser-91. The region spanning 97–140 is the CUE domain; that stretch reads KENPILQELKDAFPNLEEKYIKAVIIASQGVLSPAFNALLFLSD. Lys-156 participates in a covalent cross-link: Glycyl lysine isopeptide (Lys-Gly) (interchain with G-Cter in ubiquitin). A Phosphothreonine modification is found at Thr-167. Positions 209–219 are enriched in basic and acidic residues; sequence NPNEREQHHED. Residue Ser-220 is modified to Phosphoserine. Residues 230-242 show a composition bias toward basic and acidic residues; it reads VEKDLPELTDRAG. The span at 245–256 shows a compositional bias: polar residues; that stretch reads LQDTANKVSNWI. Phosphoserine occurs at positions 309 and 318. Residue Thr-346 is modified to Phosphothreonine. At Ser-348 the chain carries Phosphoserine. The residue at position 352 (Thr-352) is a Phosphothreonine. Lys-354 is covalently cross-linked (Glycyl lysine isopeptide (Lys-Gly) (interchain with G-Cter in ubiquitin)). Phosphothreonine occurs at positions 364 and 367. The AIM signature appears at 373–376; sequence WQPL. A Glycyl lysine isopeptide (Lys-Gly) (interchain with G-Cter in ubiquitin) cross-link involves residue Lys-396. Positions 399 to 411 are enriched in acidic residues; the sequence is DEDEFLINSDDEM. Ser-407 is modified (phosphoserine).

Interacts with ATG8 (via AIM motif), CLB2, and ubiquitin (via CUE domain).

The protein resides in the cytoplasm. Functionally, connects the ubiquitin pathway to autophagy by functioning as a ubiquitin-ATG8 adapter and thus mediating autophagic clearance of ubiquitin conjugates under starvation conditions. The CUE5-dependent selective autophagy pathway plays an important role in clearance of cytotoxic protein aggregates. Not required for cytoplasmic to vacuole pathway (cvt), mitophagy, pexophagy, or ribophagy. The sequence is that of Ubiquitin-binding protein CUE5 from Saccharomyces cerevisiae (strain ATCC 204508 / S288c) (Baker's yeast).